Consider the following 138-residue polypeptide: Microneme antigen L2 (138 aa).

2 consecutive PAN domains span residues 9–78 and 82–138; these read CFAH…PRSC and CSDA…SKRA. Disulfide bonds link C9/C78, C34/C56, C38/C44, C82/C86, C107/C127, and C111/C117. Residue S18 coordinates a carbohydrate. Positions 59, 66, and 71 each coordinate a carbohydrate.

In terms of assembly, homodimer or heterodimer. Post-translationally, contains six disulfide bonds.

It localises to the cytoplasmic vesicle. The protein localises to the secretory vesicle. It is found in the microneme. In terms of biological role, galactose-binding lectin. Plays a role in adhesion to the host cell. Has a potential role in invasion of host cells. This chain is Microneme antigen L2, found in Sarcocystis muris.